Reading from the N-terminus, the 416-residue chain is Multifunctional CCA protein (416 aa).

Positions 8 and 11 each coordinate ATP. Gly8 and Arg11 together coordinate CTP. Residues Asp21 and Asp23 each coordinate Mg(2+). ATP is bound by residues Arg91, Arg137, and Arg140. Positions 91, 137, and 140 each coordinate CTP. Positions 228–329 (TGVHTLMVLA…VKIFDKADFW (102 aa)) constitute an HD domain.

The protein belongs to the tRNA nucleotidyltransferase/poly(A) polymerase family. Bacterial CCA-adding enzyme type 1 subfamily. Monomer. Can also form homodimers and oligomers. Mg(2+) is required as a cofactor. Ni(2+) serves as cofactor.

It carries out the reaction a tRNA precursor + 2 CTP + ATP = a tRNA with a 3' CCA end + 3 diphosphate. The enzyme catalyses a tRNA with a 3' CCA end + 2 CTP + ATP = a tRNA with a 3' CCACCA end + 3 diphosphate. In terms of biological role, catalyzes the addition and repair of the essential 3'-terminal CCA sequence in tRNAs without using a nucleic acid template. Adds these three nucleotides in the order of C, C, and A to the tRNA nucleotide-73, using CTP and ATP as substrates and producing inorganic pyrophosphate. tRNA 3'-terminal CCA addition is required both for tRNA processing and repair. Also involved in tRNA surveillance by mediating tandem CCA addition to generate a CCACCA at the 3' terminus of unstable tRNAs. While stable tRNAs receive only 3'-terminal CCA, unstable tRNAs are marked with CCACCA and rapidly degraded. The polypeptide is Multifunctional CCA protein (Shewanella baltica (strain OS155 / ATCC BAA-1091)).